The chain runs to 344 residues: uncharacterized protein (344 aa).

Residues 190 to 232 are disordered; that stretch reads SGKRVRSAKKSGADAARASEGATCDRASSESVSPTARPPAQAS.

This is an uncharacterized protein from Treponema pallidum (strain Nichols).